We begin with the raw amino-acid sequence, 336 residues long: uncharacterized protein (336 aa).

29-36 (GPKSSGKS) is an ATP binding site.

It belongs to the archaeal ATPase family.

This is an uncharacterized protein from Methanocaldococcus jannaschii (strain ATCC 43067 / DSM 2661 / JAL-1 / JCM 10045 / NBRC 100440) (Methanococcus jannaschii).